The sequence spans 359 residues: Putative B3 domain-containing protein At3g24850 (359 aa).

Disordered stretches follow at residues 92 to 111 (DSEI…LQNS) and 159 to 192 (EKME…KRTG). Residues 100–111 (TSDSQMKTLQNS) are compositionally biased toward polar residues. Positions 250–351 (FNNLLQNDFL…VLCFAMEQSS (102 aa)) form a DNA-binding region, TF-B3.

The protein localises to the nucleus. The chain is Putative B3 domain-containing protein At3g24850 from Arabidopsis thaliana (Mouse-ear cress).